The sequence spans 652 residues: Acetyl-coenzyme A synthetase (652 aa).

CoA is bound by residues 191-194 (RAGR), Thr311, and Asn335. ATP contacts are provided by residues 387 to 389 (GEP), 411 to 416 (DTWWQT), Asp500, and Arg515. Residue Ser523 participates in CoA binding. Arg526 provides a ligand contact to ATP. The Mg(2+) site is built by Val537, His539, and Ile542. Arg584 contributes to the CoA binding site. Position 609 is an N6-acetyllysine (Lys609).

Belongs to the ATP-dependent AMP-binding enzyme family. Mg(2+) serves as cofactor. Acetylated. Deacetylation by the SIR2-homolog deacetylase activates the enzyme.

The enzyme catalyses acetate + ATP + CoA = acetyl-CoA + AMP + diphosphate. In terms of biological role, catalyzes the conversion of acetate into acetyl-CoA (AcCoA), an essential intermediate at the junction of anabolic and catabolic pathways. Acs undergoes a two-step reaction. In the first half reaction, Acs combines acetate with ATP to form acetyl-adenylate (AcAMP) intermediate. In the second half reaction, it can then transfer the acetyl group from AcAMP to the sulfhydryl group of CoA, forming the product AcCoA. Its function is as follows. Enables the cell to use acetate during aerobic growth to generate energy via the TCA cycle, and biosynthetic compounds via the glyoxylate shunt. Acetylates CheY, the response regulator involved in flagellar movement and chemotaxis. In Sodalis glossinidius (strain morsitans), this protein is Acetyl-coenzyme A synthetase.